Reading from the N-terminus, the 866-residue chain is N-alpha-acetyltransferase 15, NatA auxiliary subunit (866 aa).

4 TPR repeats span residues 46–79 (GETL…DLKS), 80–113 (HVCW…DKDN), 148–184 (RASW…SPDK), and 224–257 (LAVE…NPEN). Lys262 is subject to N6-acetyllysine. At Ser302 the chain carries Phosphoserine. TPR repeat units follow at residues 374–407 (LWVQ…TPTL), 409–441 (ELFL…DTAD), and 485–518 (MWFQ…FIEI). The segment at 500–866 (KFGEALKKCH…AEAEELANEI (367 aa)) is interaction with HYPK. Ser537 and Ser588 each carry phosphoserine. A compositionally biased stretch (basic and acidic residues) spans 579–594 (EHEADTANMSDKELKK). The tract at residues 579–642 (EHEADTANMS…EEIGGPKEEL (64 aa)) is disordered. Over residues 595 to 604 (LRNKQRRAQK) the composition is skewed to basic residues. Residues 606 to 621 (AQIEEEKKNAEKEKQQ) are compositionally biased toward basic and acidic residues. Positions 612–629 (KKNAEKEKQQRNQKKKKD) match the Bipartite nuclear localization signal motif. The TPR 8 repeat unit spans residues 672–705 (IETHLFAFEIYFRKEKFLLMLQSVKRAFAIDSSH). N6-acetyllysine is present on residues Lys735 and Lys756. Phosphoserine is present on residues Ser855 and Ser856.

In terms of assembly, component of the N-terminal acetyltransferase A complex (also called the NatA complex) composed of NAA10 and NAA15. Within the complex interacts with NAA10. Component of the N-terminal acetyltransferase A (NatA)/HYPK complex at least composed of NAA10, NAA15 and HYPK, which has N-terminal acetyltransferase activity. In complex with NAA10, interacts with HYPK. Component of the N-terminal acetyltransferase E (NatE) complex at least composed of NAA10, NAA15 and NAA50. Within the complex interacts with NAA10; the interaction is required for binding to NAA50. Interacts with NAAT50. The interaction of the NatA complex with NAA50 reduces the acetylation activity of the NatA complex. Component of the N-terminal acetyltransferase E (NatE)/HYPK complex at least composed of NAA10, NAA15, NAA50 and HYPK. In complex with NAA10 interacts with HYPK; the interaction with HYPK reduces the capacity of the NatA complex to interact with NAA50. Interacts with NAA11. Interacts with XRCC6 and XRCC5. Post-translationally, cleaved by caspases during apoptosis, resulting in a stable 35 kDa fragment. As to expression, expressed at high levels in testis and in ocular endothelial cells. Also found in brain (corpus callosum), heart, colon, bone marrow and at lower levels in most adult tissues, including thyroid, liver, pancreas, mammary and salivary glands, lung, ovary, urogenital system and upper gastrointestinal tract. Overexpressed in gastric cancer, in papillary thyroid carcinomas and in a Burkitt lymphoma cell line (Daudi). Specifically suppressed in abnormal proliferating blood vessels in eyes of patients with proliferative diabetic retinopathy.

The protein resides in the cytoplasm. It localises to the nucleus. Auxillary subunit of N-terminal acetyltransferase complexes which display alpha (N-terminal) acetyltransferase (NAT) activity. The NAT activity may be important for vascular, hematopoietic and neuronal growth and development. Required to control retinal neovascularization in adult ocular endothelial cells. In complex with XRCC6 and XRCC5 (Ku80), up-regulates transcription from the osteocalcin promoter. This chain is N-alpha-acetyltransferase 15, NatA auxiliary subunit (NAA15), found in Homo sapiens (Human).